Reading from the N-terminus, the 74-residue chain is Holin (74 aa).

2 helical membrane-spanning segments follow: residues 15 to 35 (VTVV…LYQF) and 37 to 57 (TTAI…VLGV).

In terms of assembly, homomultimer.

The protein resides in the host cell inner membrane. Functionally, accumulates harmlessly in the cytoplasmic membrane until it reaches a critical concentration that triggers the formation of micron-scale pores (holes) causing host cell membrane disruption and endolysin escape into the periplasmic space. Determines the precise timing of host cell lysis. Participates with the endolysin protein in the sequential events which lead to the programmed host cell lysis releasing the mature viral particles from the host cell. The protein is Holin (dph) of Streptococcus pneumoniae (Bacteriophage Dp-1).